A 197-amino-acid polypeptide reads, in one-letter code: dTTP/UTP pyrophosphatase (197 aa).

D70 acts as the Proton acceptor in catalysis.

The protein belongs to the Maf family. YhdE subfamily. The cofactor is a divalent metal cation.

The protein resides in the cytoplasm. The catalysed reaction is dTTP + H2O = dTMP + diphosphate + H(+). It carries out the reaction UTP + H2O = UMP + diphosphate + H(+). Its function is as follows. Nucleoside triphosphate pyrophosphatase that hydrolyzes dTTP and UTP. May have a dual role in cell division arrest and in preventing the incorporation of modified nucleotides into cellular nucleic acids. This Shigella boydii serotype 4 (strain Sb227) protein is dTTP/UTP pyrophosphatase (yceF2).